We begin with the raw amino-acid sequence, 428 residues long: Sporulation kinase B (428 aa).

Over 1–6 (MEILKD) the chain is Cytoplasmic. The helical transmembrane segment at 7–27 (YLLHICFILFPILLYQVFWLG) threads the bilayer. Topologically, residues 28 to 37 (KPAILVPKIN) are extracellular. The chain crosses the membrane as a helical span at residues 38 to 58 (SGLVTLFACGASVLCIIFPIH). Residues 59–68 (EMDYIQYGLQ) are Cytoplasmic-facing. Residues 69 to 89 (MIPVIICLFYISTASGLTVAA) traverse the membrane as a helical segment. Residues 90–99 (SVLCFELLFY) lie on the Extracellular side of the membrane. Residues 100 to 120 (EPSAMFVFTLLPFLIIIPILF) traverse the membrane as a helical segment. Residues 121–132 (QKKWPFMSKAKK) are Cytoplasmic-facing. Residues 133–153 (LLLSLLISCVEIFLFFASSWI) form a helical membrane-spanning segment. Topologically, residues 154–166 (LSALNILNFQKSG) are extracellular. A helical transmembrane segment spans residues 167–187 (IFVYEAAVSGLFRSSVLLLSI). At 188 to 428 (YIIESIAENI…TIKLPADLPH (241 aa)) the chain is on the cytoplasmic side. One can recognise a Histidine kinase domain in the interval 218 to 426 (SVAHEVRNPL…TVTIKLPADL (209 aa)). Histidine 221 carries the phosphohistidine; by autocatalysis modification.

The protein localises to the cell membrane. It catalyses the reaction ATP + protein L-histidine = ADP + protein N-phospho-L-histidine.. Functionally, phosphorylates the sporulation-regulatory proteins spo0A and spo0F. Spo0F is required for the KinB activity. This Bacillus subtilis (strain 168) protein is Sporulation kinase B (kinB).